The following is a 487-amino-acid chain: uncharacterized protein (487 aa).

Belongs to the UbiD family.

This is an uncharacterized protein from Aeropyrum pernix (strain ATCC 700893 / DSM 11879 / JCM 9820 / NBRC 100138 / K1).